Consider the following 207-residue polypeptide: Holliday junction branch migration complex subunit RuvA (207 aa).

The domain I stretch occupies residues 1–64 (MIGLISGQVQ…EDAQLLYGFI (64 aa)). The segment at 65–143 (DRKERDVFRQ…NIEVDNSNLE (79 aa)) is domain II. Residues 144 to 152 (FAIQPAPIS) are flexible linker. Residues 153–207 (AEDSIIAEVEGALMSLGYKEKEAQQAIKAAKSNGETFADTQSLLKATLQQFQSFK) are domain III.

It belongs to the RuvA family. Homotetramer. Forms an RuvA(8)-RuvB(12)-Holliday junction (HJ) complex. HJ DNA is sandwiched between 2 RuvA tetramers; dsDNA enters through RuvA and exits via RuvB. An RuvB hexamer assembles on each DNA strand where it exits the tetramer. Each RuvB hexamer is contacted by two RuvA subunits (via domain III) on 2 adjacent RuvB subunits; this complex drives branch migration. In the full resolvosome a probable DNA-RuvA(4)-RuvB(12)-RuvC(2) complex forms which resolves the HJ.

It is found in the cytoplasm. The RuvA-RuvB-RuvC complex processes Holliday junction (HJ) DNA during genetic recombination and DNA repair, while the RuvA-RuvB complex plays an important role in the rescue of blocked DNA replication forks via replication fork reversal (RFR). RuvA specifically binds to HJ cruciform DNA, conferring on it an open structure. The RuvB hexamer acts as an ATP-dependent pump, pulling dsDNA into and through the RuvAB complex. HJ branch migration allows RuvC to scan DNA until it finds its consensus sequence, where it cleaves and resolves the cruciform DNA. This is Holliday junction branch migration complex subunit RuvA from Psychrobacter arcticus (strain DSM 17307 / VKM B-2377 / 273-4).